Here is a 286-residue protein sequence, read N- to C-terminus: 4-hydroxybenzoate octaprenyltransferase (286 aa).

The next 7 helical transmembrane spans lie at 20–40, 43–63, 95–115, 142–162, 167–187, 210–230, and 234–254; these read IGTL…AGGM, LKVL…GCII, ILFA…NPLV, FLGV…TGEV, WWLF…YAMV, QIIG…GWAA, and LVYG…QKLI.

It belongs to the UbiA prenyltransferase family. It depends on Mg(2+) as a cofactor.

It localises to the cell inner membrane. It carries out the reaction all-trans-octaprenyl diphosphate + 4-hydroxybenzoate = 4-hydroxy-3-(all-trans-octaprenyl)benzoate + diphosphate. It functions in the pathway cofactor biosynthesis; ubiquinone biosynthesis. Its function is as follows. Catalyzes the prenylation of para-hydroxybenzoate (PHB) with an all-trans polyprenyl group. Mediates the second step in the final reaction sequence of ubiquinone-8 (UQ-8) biosynthesis, which is the condensation of the polyisoprenoid side chain with PHB, generating the first membrane-bound Q intermediate 3-octaprenyl-4-hydroxybenzoate. This Shewanella sediminis (strain HAW-EB3) protein is 4-hydroxybenzoate octaprenyltransferase.